The following is a 401-amino-acid chain: Chorismate synthase (401 aa).

Positions 40 and 46 each coordinate NADP(+). Residues R135–S137, Q256–A257, G300, K315–T319, and R341 each bind FMN.

The protein belongs to the chorismate synthase family. Homotetramer. It depends on FMNH2 as a cofactor.

The catalysed reaction is 5-O-(1-carboxyvinyl)-3-phosphoshikimate = chorismate + phosphate. It functions in the pathway metabolic intermediate biosynthesis; chorismate biosynthesis; chorismate from D-erythrose 4-phosphate and phosphoenolpyruvate: step 7/7. Catalyzes the anti-1,4-elimination of the C-3 phosphate and the C-6 proR hydrogen from 5-enolpyruvylshikimate-3-phosphate (EPSP) to yield chorismate, which is the branch point compound that serves as the starting substrate for the three terminal pathways of aromatic amino acid biosynthesis. This reaction introduces a second double bond into the aromatic ring system. This chain is Chorismate synthase, found in Mycobacterium bovis (strain BCG / Pasteur 1173P2).